The sequence spans 310 residues: Small ribosomal subunit protein uS2 (310 aa).

Positions 249–272 are enriched in basic and acidic residues; it reads WERDLLEGEKAEKKDDAEAAEKPA. Positions 249-310 are disordered; the sequence is WERDLLEGEK…EAPAADAEQA (62 aa). The span at 273–310 shows a compositional bias: low complexity; sequence EAPAAEAPAAEAAEAPAAEAAPAEEPAAEAPAADAEQA.

Belongs to the universal ribosomal protein uS2 family.

The chain is Small ribosomal subunit protein uS2 (rpsB) from Streptomyces coelicolor (strain ATCC BAA-471 / A3(2) / M145).